A 231-amino-acid polypeptide reads, in one-letter code: Ion-translocating oxidoreductase complex subunit E (231 aa).

Helical transmembrane passes span A18–A38, L39–L59, T63–V83, L86–V106, A125–L145, and P182–G202.

This sequence belongs to the NqrDE/RnfAE family. As to quaternary structure, the complex is composed of six subunits: RsxA, RsxB, RsxC, RsxD, RsxE and RsxG.

It is found in the cell inner membrane. In terms of biological role, part of a membrane-bound complex that couples electron transfer with translocation of ions across the membrane. Required to maintain the reduced state of SoxR. The protein is Ion-translocating oxidoreductase complex subunit E of Escherichia coli (strain ATCC 8739 / DSM 1576 / NBRC 3972 / NCIMB 8545 / WDCM 00012 / Crooks).